A 193-amino-acid chain; its full sequence is MTALTQPVRLPFVTTDLDVLLRQVAERDVDAFAALYDRTRSRVYGMVTRVLRDPGYSEETTQDIYLQVWRSAGSYDPKAGSPMAWLLTLAHRRAVDRVRSEEAASQRESRYGAASVDPPVDHVADSVILLDERRRVVDCMGSLSDLQREAIQLAYYEGLTYVQVSERLSANLATIKSRMRGGIRGLKNCLGMS.

The sigma-70 factor domain-2 stretch occupies residues 35–101 (LYDRTRSRVY…RRAVDRVRSE (67 aa)). Positions 59–62 (ETTQ) match the Polymerase core binding motif. Residues 140-187 (MGSLSDLQREAIQLAYYEGLTYVQVSERLSANLATIKSRMRGGIRGLK) are sigma-70 factor domain-4. The H-T-H motif DNA-binding region spans 161–180 (YVQVSERLSANLATIKSRMR).

The protein belongs to the sigma-70 factor family. ECF subfamily. In terms of assembly, interacts transiently with the RNA polymerase catalytic core formed by RpoA, RpoB, RpoC and RpoZ (2 alpha, 1 beta, 1 beta' and 1 omega subunit) to form the RNA polymerase holoenzyme that can initiate transcription. Interacts (via sigma-70 factor domain 4) with anti-sigma-K factor RskA.

In terms of biological role, sigma factors are initiation factors that promote the attachment of RNA polymerase to specific initiation sites and are then released. Extracytoplasmic function (ECF) sigma factors are held in an inactive form by an anti-sigma factor until released by regulated intramembrane proteolysis. This is ECF RNA polymerase sigma factor SigK (sigK) from Mycobacterium sp. (strain KMS).